We begin with the raw amino-acid sequence, 277 residues long: 2,3,4,5-tetrahydropyridine-2,6-dicarboxylate N-succinyltransferase (277 aa).

Substrate is bound by residues R106 and D143.

It belongs to the transferase hexapeptide repeat family. In terms of assembly, homotrimer.

The protein resides in the cytoplasm. The catalysed reaction is (S)-2,3,4,5-tetrahydrodipicolinate + succinyl-CoA + H2O = (S)-2-succinylamino-6-oxoheptanedioate + CoA. Its pathway is amino-acid biosynthesis; L-lysine biosynthesis via DAP pathway; LL-2,6-diaminopimelate from (S)-tetrahydrodipicolinate (succinylase route): step 1/3. This Xylella fastidiosa (strain Temecula1 / ATCC 700964) protein is 2,3,4,5-tetrahydropyridine-2,6-dicarboxylate N-succinyltransferase.